The following is a 1283-amino-acid chain: Rab11 family-interacting protein 1 (1283 aa).

The C2 domain occupies 1–126 (MSLMVSAGRG…DQGRRKTQWY (126 aa)). Residues 161–185 (SMKDKSRNPFGKLKDKIKGKNKDSG) show a composition bias toward basic and acidic residues. The interval 161–281 (SMKDKSRNPF…VMSHKRTAST (121 aa)) is disordered. 4 positions are modified to phosphoserine: Ser184, Ser202, Ser206, and Ser234. Positions 225 to 239 (NLQKTPLSQSMSVLP) are enriched in polar residues. Residues 257-266 (WDEDDNEDES) show a composition bias toward acidic residues. A phosphoserine mark is found at Ser300, Ser315, Ser339, Ser341, Ser343, Ser345, Ser356, Ser357, and Ser382. 5 disordered regions span residues 330 to 727 (EAKG…QEVP), 741 to 782 (VGEL…ASVP), 835 to 913 (PQEL…LFRM), 969 to 993 (DERI…KSST), and 1037 to 1141 (ASVT…RVEN). Basic and acidic residues predominate over residues 419 to 433 (ATKEAKESKKPESRR). Ser435 is modified (phosphoserine). The segment covering 442–451 (GKKDVAKGSE) has biased composition (basic and acidic residues). Residue Ser477 is modified to Phosphoserine. Residues 482–491 (DLVRRSEKDT) are compositionally biased toward basic and acidic residues. A phosphoserine mark is found at Ser529 and Ser545. Over residues 588 to 612 (SSESPSVFSSLSSPIAAPISTSTPI) the composition is skewed to low complexity. Over residues 637–652 (QTESLTPVPNSGSSAL) the composition is skewed to polar residues. Over residues 698–715 (ETGRQEEELPRFPCKKQD) the composition is skewed to basic and acidic residues. Residue Ser758 is modified to Phosphoserine. Residues 855–866 (ESPHAEDSERES) are compositionally biased toward basic and acidic residues. Residues 975-986 (VEDDGDQVEDDG) show a composition bias toward acidic residues. Over residues 1037–1048 (ASVTAPSEQTTE) the composition is skewed to polar residues. Positions 1116 to 1131 (SDTHHTSTAESQKKAT) are enriched in basic and acidic residues. Residue Ser1135 is modified to Phosphoserine. Residues 1211–1273 (KKYSPSDPAF…EETPNILRIP (63 aa)) form the FIP-RBD domain. A necessary for interaction with RAB4A and RAB11A, subcellular location and endosomal recycling region spans residues 1219 to 1283 (AFAYAQLTHD…TQVGKKAGKM (65 aa)).

As to quaternary structure, interacts with RAB11A (GTP-bound form); the interaction induces RAB11FIP1 recruitment to membranes. Interacts with RAB14 (GTP-bound form). In terms of assembly, homooligomer. Isoform 2 interacts with RAB4A, RAB11A, RAB11B and RAB25. According to PubMed:15280022, RAB4A binding to RAB11FIP1 is of very low affinity in vitro and in vivo. As to expression, isoform 2 is expressed in brain, heart, testis, lung, spleen, ovary and small intestine.

The protein localises to the recycling endosome. It localises to the cytoplasmic vesicle. Its subcellular location is the phagosome membrane. Its function is as follows. A Rab11 effector protein involved in the endosomal recycling process. Also involved in controlling membrane trafficking along the phagocytic pathway and in phagocytosis. Interaction with RAB14 may function in the process of neurite formation. This Homo sapiens (Human) protein is Rab11 family-interacting protein 1.